Here is a 344-residue protein sequence, read N- to C-terminus: Phenylalanine--tRNA ligase alpha subunit (344 aa).

Position 258 (E258) interacts with Mg(2+).

This sequence belongs to the class-II aminoacyl-tRNA synthetase family. Phe-tRNA synthetase alpha subunit type 1 subfamily. As to quaternary structure, tetramer of two alpha and two beta subunits. The cofactor is Mg(2+).

The protein localises to the cytoplasm. It catalyses the reaction tRNA(Phe) + L-phenylalanine + ATP = L-phenylalanyl-tRNA(Phe) + AMP + diphosphate + H(+). This chain is Phenylalanine--tRNA ligase alpha subunit, found in Thiobacillus denitrificans (strain ATCC 25259 / T1).